Reading from the N-terminus, the 459-residue chain is Bifunctional protein GlmU (459 aa).

The pyrophosphorylase stretch occupies residues methionine 1–arginine 230. Residues leucine 9–glycine 12, lysine 23, glutamine 73, and glycine 78–threonine 79 each bind UDP-N-acetyl-alpha-D-glucosamine. Residue aspartate 103 participates in Mg(2+) binding. UDP-N-acetyl-alpha-D-glucosamine contacts are provided by glycine 140, glutamate 155, asparagine 170, and asparagine 228. A Mg(2+)-binding site is contributed by asparagine 228. The segment at valine 231–asparagine 251 is linker. An N-acetyltransferase region spans residues glycine 252–serine 459. Residues arginine 333 and lysine 351 each contribute to the UDP-N-acetyl-alpha-D-glucosamine site. Histidine 363 functions as the Proton acceptor in the catalytic mechanism. Positions 366 and 377 each coordinate UDP-N-acetyl-alpha-D-glucosamine. Acetyl-CoA contacts are provided by residues asparagine 386–tyrosine 387, alanine 423, and arginine 440.

The protein in the N-terminal section; belongs to the N-acetylglucosamine-1-phosphate uridyltransferase family. In the C-terminal section; belongs to the transferase hexapeptide repeat family. In terms of assembly, homotrimer. Mg(2+) serves as cofactor.

The protein localises to the cytoplasm. The catalysed reaction is alpha-D-glucosamine 1-phosphate + acetyl-CoA = N-acetyl-alpha-D-glucosamine 1-phosphate + CoA + H(+). It carries out the reaction N-acetyl-alpha-D-glucosamine 1-phosphate + UTP + H(+) = UDP-N-acetyl-alpha-D-glucosamine + diphosphate. Its pathway is nucleotide-sugar biosynthesis; UDP-N-acetyl-alpha-D-glucosamine biosynthesis; N-acetyl-alpha-D-glucosamine 1-phosphate from alpha-D-glucosamine 6-phosphate (route II): step 2/2. It participates in nucleotide-sugar biosynthesis; UDP-N-acetyl-alpha-D-glucosamine biosynthesis; UDP-N-acetyl-alpha-D-glucosamine from N-acetyl-alpha-D-glucosamine 1-phosphate: step 1/1. The protein operates within bacterial outer membrane biogenesis; LPS lipid A biosynthesis. Catalyzes the last two sequential reactions in the de novo biosynthetic pathway for UDP-N-acetylglucosamine (UDP-GlcNAc). The C-terminal domain catalyzes the transfer of acetyl group from acetyl coenzyme A to glucosamine-1-phosphate (GlcN-1-P) to produce N-acetylglucosamine-1-phosphate (GlcNAc-1-P), which is converted into UDP-GlcNAc by the transfer of uridine 5-monophosphate (from uridine 5-triphosphate), a reaction catalyzed by the N-terminal domain. This chain is Bifunctional protein GlmU, found in Bacillus mycoides (strain KBAB4) (Bacillus weihenstephanensis).